Consider the following 519-residue polypeptide: MGRTRKANVCRRLSRRALGFYARDAGVVQRTNLGILRALVCQESTKFKNVWTTHSKSPIAYERGRIYFDNYRCCVSSVASEPRKLYEMPKCSKSEKIEDALLWECPVGDILPDPSDYKSSLIALTAHNWLLRISATTGEVLEKIYLASYCKFRYLSWDTPQEVIAVKSAQNKGSAAARQAGTSPPVLLYLAVFRVLPFSLVGILEINKKVFENVTDATLSHGILIVMYSSGLVRLYSFQAIIEQFMQQKLDLGCACSQGGTTGTVGEAPFGIPCNVKITDSPPPLFEVSSLENAFQIGGHPWHYIITPNKKKQKGVFHICALKDNSLAKNGIQEMECCSLESDWIYFHPDASGRIIHVGPNQVKVLKLSEVENDSSQHQISEDFVIWAKREDRKENLITVTASGRVVKRNVSLLDDDPEQETFKIVDYEDELDLLSVVAVTQIDAEGKAHLDFHCNEYGTLLKSIPLVESWDVTYSHEVYFDRDLVLHIEQKPNRVFSCYVYQMVCDPGEEEEAVNRSG.

A run of 2 helical transmembrane segments spans residues 186-206 (VLLYLAVFRVLPFSLVGILEI) and 222-242 (GILIVMYSSGLVRLYSFQAII).

Interacts with DDB1, CUL4A and CUL4B. As to expression, ubiquitously expressed in the embryo, with higher expression in brain, liver and skin tissues.

Its subcellular location is the membrane. The protein localises to the nucleus. It localises to the nucleolus. Its pathway is protein modification; protein ubiquitination. In terms of biological role, may function as a substrate receptor for CUL4-DDB1 E3 ubiquitin-protein ligase complex. In Mus musculus (Mouse), this protein is DDB1- and CUL4-associated factor 17 (Dcaf17).